The primary structure comprises 797 residues: Short transient receptor potential channel 4-associated protein (797 aa).

An N-acetylalanine modification is found at A2. Residues A2–M400 are interaction with TNFRSF1A.

Component of the DCX(TRPC4AP) E3 ubiquitin ligase complex, at least composed of CUL4A, DDB1, TRPC4AP/TRUSS and RBX1. Interacts with MYC. Constitutively associated with TNFRSF1A. Directly interacts with TRADD, TRAF2, CHUK, IKBKB and IKBKG. Interacts with TRPC1, TRPC4 and TRPC5. In terms of assembly, (Microbial infection) Interacts with Hepatitis B virus (HBV) protein X; leading to prevent ubiquitination of TRPC4AP by SKP2. Phosphorylated by GSK3B; phosphorylation is required for ubiquitination. In terms of processing, ubiquitinated by a SCF (SKP1-CUL1-F-box protein) E3 ubiquitin-protein ligase containing SKP2, leading to its degradation. Phosphorylation by GSK3B is required for ubiquitination.

It localises to the cytoplasm. Its subcellular location is the perinuclear region. It functions in the pathway protein modification; protein ubiquitination. Substrate-recognition component of a DCX (DDB1-CUL4-X-box) E3 ubiquitin-protein ligase complex required for cell cycle control. The DCX(TRPC4AP) complex specifically mediates the polyubiquitination and subsequent degradation of MYC as part of the DesCEND (destruction via C-end degrons) pathway. The DesCEND (destruction via C-end degrons) pathway recognizes a C-degron located at the extreme C terminus of target proteins, leading to their ubiquitination and degradation. The DCX(TRPC4AP) complex specifically recognizes proteins with an arginine at the minus 3 position (R-3 motif) at the C-terminus, such as MYC, leading to their ubiquitination and degradation. Also participates in the activation of NFKB1 in response to ligation of TNFRSF1A, possibly by linking TNFRSF1A to the IKK signalosome. Involved in JNK activation via its interaction with TRAF2. Also involved in elevation of endoplasmic reticulum Ca(2+) storage reduction in response to CHRM1. This is Short transient receptor potential channel 4-associated protein from Homo sapiens (Human).